Consider the following 407-residue polypeptide: Enolase-binding protein (407 aa).

The first 24 residues, 1–24 (MALGNALYPLTATVFLCVVGFATS), serve as a signal peptide directing secretion. The Extracellular segment spans residues 25 to 366 (SNENSRFLIN…FGQAYPGFRN (342 aa)). N-linked (GlcNAc...) asparagine glycans are attached at residues N52, N78, N161, and N250. A helical transmembrane segment spans residues 367–387 (VAIGAAILFFSVLGVAIIDMI). Residues 388 to 407 (RRTIANRRAKRLHLGKYSRT) lie on the Cytoplasmic side of the membrane.

(Microbial infection) Interacts with ENO/enolase from parasites P.berghei and P.falciparum. Expressed in the female midgut epithelium.

The protein resides in the cell membrane. Functionally, (Microbial infection) Acts as a receptor for ENO/enolase from parasites P.berghei and P.falciparum. The interaction is involved in the invasion of the mosquito midgut by P.berghei ookinete, but is dispensable for P.falciparum ookinete invasion. The sequence is that of Enolase-binding protein from Anopheles gambiae (African malaria mosquito).